Consider the following 682-residue polypeptide: DNA-directed RNA polymerase subunit beta' (682 aa).

Zn(2+)-binding residues include Cys-69, Cys-71, Cys-87, and Cys-90. Asp-489, Asp-491, and Asp-493 together coordinate Mg(2+).

The protein belongs to the RNA polymerase beta' chain family. RpoC1 subfamily. In plastids the minimal PEP RNA polymerase catalytic core is composed of four subunits: alpha, beta, beta', and beta''. When a (nuclear-encoded) sigma factor is associated with the core the holoenzyme is formed, which can initiate transcription. It depends on Mg(2+) as a cofactor. Requires Zn(2+) as cofactor.

Its subcellular location is the plastid. It is found in the chloroplast. It catalyses the reaction RNA(n) + a ribonucleoside 5'-triphosphate = RNA(n+1) + diphosphate. Its function is as follows. DNA-dependent RNA polymerase catalyzes the transcription of DNA into RNA using the four ribonucleoside triphosphates as substrates. The chain is DNA-directed RNA polymerase subunit beta' from Hordeum vulgare (Barley).